The primary structure comprises 286 residues: Formamidopyrimidine-DNA glycosylase (286 aa).

P2 acts as the Schiff-base intermediate with DNA in catalysis. The active-site Proton donor is E3. The active-site Proton donor; for beta-elimination activity is K60. 3 residues coordinate DNA: H103, R122, and R167. An FPG-type zinc finger spans residues 252-286 (WVYRRNQKPCRKCGTLIEKTKVAGRSTHWCPNCQN). Residue R276 is the Proton donor; for delta-elimination activity of the active site.

The protein belongs to the FPG family. As to quaternary structure, monomer. Requires Zn(2+) as cofactor.

The enzyme catalyses Hydrolysis of DNA containing ring-opened 7-methylguanine residues, releasing 2,6-diamino-4-hydroxy-5-(N-methyl)formamidopyrimidine.. It carries out the reaction 2'-deoxyribonucleotide-(2'-deoxyribose 5'-phosphate)-2'-deoxyribonucleotide-DNA = a 3'-end 2'-deoxyribonucleotide-(2,3-dehydro-2,3-deoxyribose 5'-phosphate)-DNA + a 5'-end 5'-phospho-2'-deoxyribonucleoside-DNA + H(+). In terms of biological role, involved in base excision repair of DNA damaged by oxidation or by mutagenic agents. Acts as a DNA glycosylase that recognizes and removes damaged bases. Has a preference for oxidized purines, such as 7,8-dihydro-8-oxoguanine (8-oxoG). Has AP (apurinic/apyrimidinic) lyase activity and introduces nicks in the DNA strand. Cleaves the DNA backbone by beta-delta elimination to generate a single-strand break at the site of the removed base with both 3'- and 5'-phosphates. The chain is Formamidopyrimidine-DNA glycosylase from Prochlorococcus marinus (strain MIT 9211).